The following is a 180-amino-acid chain: Large ribosomal subunit protein uL5 (180 aa).

The protein belongs to the universal ribosomal protein uL5 family. Part of the 50S ribosomal subunit; part of the 5S rRNA/L5/L18/L25 subcomplex. Contacts the 5S rRNA and the P site tRNA. Forms a bridge to the 30S subunit in the 70S ribosome.

This is one of the proteins that bind and probably mediate the attachment of the 5S RNA into the large ribosomal subunit, where it forms part of the central protuberance. In the 70S ribosome it contacts protein S13 of the 30S subunit (bridge B1b), connecting the 2 subunits; this bridge is implicated in subunit movement. Contacts the P site tRNA; the 5S rRNA and some of its associated proteins might help stabilize positioning of ribosome-bound tRNAs. The sequence is that of Large ribosomal subunit protein uL5 from Stenotrophomonas maltophilia (strain R551-3).